Here is a 433-residue protein sequence, read N- to C-terminus: Pyrimidine-nucleoside phosphorylase (433 aa).

81 to 83 (KHS) lines the phosphate pocket. Positions 88 and 90 each coordinate K(+). Phosphate contacts are provided by residues threonine 92, 108–110 (KMS), and threonine 120. Residues arginine 168 and lysine 187 each coordinate substrate. Residues leucine 243, alanine 246, and glutamate 255 each contribute to the K(+) site.

This sequence belongs to the thymidine/pyrimidine-nucleoside phosphorylase family. In terms of assembly, homodimer. K(+) is required as a cofactor.

It carries out the reaction uridine + phosphate = alpha-D-ribose 1-phosphate + uracil. The catalysed reaction is thymidine + phosphate = 2-deoxy-alpha-D-ribose 1-phosphate + thymine. The enzyme catalyses 2'-deoxyuridine + phosphate = 2-deoxy-alpha-D-ribose 1-phosphate + uracil. In terms of biological role, catalyzes phosphorolysis of the pyrimidine nucleosides uridine, thymidine and 2'-deoxyuridine with the formation of the corresponding pyrimidine base and ribose-1-phosphate. The protein is Pyrimidine-nucleoside phosphorylase (pdp) of Staphylococcus haemolyticus (strain JCSC1435).